The primary structure comprises 137 residues: Small ribosomal subunit protein uS12 (137 aa).

The disordered stretch occupies residues 33–57 (KVQTNVSSPQKRGVATRVGTMTPKK). 3-methylthioaspartic acid is present on aspartate 102.

It belongs to the universal ribosomal protein uS12 family. As to quaternary structure, part of the 30S ribosomal subunit. Contacts proteins S8 and S17. May interact with IF1 in the 30S initiation complex.

Its function is as follows. With S4 and S5 plays an important role in translational accuracy. Functionally, interacts with and stabilizes bases of the 16S rRNA that are involved in tRNA selection in the A site and with the mRNA backbone. Located at the interface of the 30S and 50S subunits, it traverses the body of the 30S subunit contacting proteins on the other side and probably holding the rRNA structure together. The combined cluster of proteins S8, S12 and S17 appears to hold together the shoulder and platform of the 30S subunit. This Streptococcus thermophilus (strain CNRZ 1066) protein is Small ribosomal subunit protein uS12.